Here is a 353-residue protein sequence, read N- to C-terminus: Holliday junction branch migration complex subunit RuvB (353 aa).

The tract at residues 1-183 is large ATPase domain (RuvB-L); it reads MSGEGLVSAA…FGFTAHMDFY (183 aa). Residues Leu22, Arg23, Gly64, Lys67, Thr68, Ser69, 130–132, Arg173, Tyr183, and Arg220 contribute to the ATP site; that span reads EDF. Residue Thr68 coordinates Mg(2+). The interval 184–254 is small ATPAse domain (RuvB-S); sequence DAAELALVLT…VARAALRIYD (71 aa). Residues 257–353 are head domain (RuvB-H); sequence ALGLDRLDRA…ALFGEDLPAS (97 aa). DNA-binding residues include Arg312 and Arg317.

This sequence belongs to the RuvB family. As to quaternary structure, homohexamer. Forms an RuvA(8)-RuvB(12)-Holliday junction (HJ) complex. HJ DNA is sandwiched between 2 RuvA tetramers; dsDNA enters through RuvA and exits via RuvB. An RuvB hexamer assembles on each DNA strand where it exits the tetramer. Each RuvB hexamer is contacted by two RuvA subunits (via domain III) on 2 adjacent RuvB subunits; this complex drives branch migration. In the full resolvosome a probable DNA-RuvA(4)-RuvB(12)-RuvC(2) complex forms which resolves the HJ.

It localises to the cytoplasm. It carries out the reaction ATP + H2O = ADP + phosphate + H(+). Functionally, the RuvA-RuvB-RuvC complex processes Holliday junction (HJ) DNA during genetic recombination and DNA repair, while the RuvA-RuvB complex plays an important role in the rescue of blocked DNA replication forks via replication fork reversal (RFR). RuvA specifically binds to HJ cruciform DNA, conferring on it an open structure. The RuvB hexamer acts as an ATP-dependent pump, pulling dsDNA into and through the RuvAB complex. RuvB forms 2 homohexamers on either side of HJ DNA bound by 1 or 2 RuvA tetramers; 4 subunits per hexamer contact DNA at a time. Coordinated motions by a converter formed by DNA-disengaged RuvB subunits stimulates ATP hydrolysis and nucleotide exchange. Immobilization of the converter enables RuvB to convert the ATP-contained energy into a lever motion, pulling 2 nucleotides of DNA out of the RuvA tetramer per ATP hydrolyzed, thus driving DNA branch migration. The RuvB motors rotate together with the DNA substrate, which together with the progressing nucleotide cycle form the mechanistic basis for DNA recombination by continuous HJ branch migration. Branch migration allows RuvC to scan DNA until it finds its consensus sequence, where it cleaves and resolves cruciform DNA. The protein is Holliday junction branch migration complex subunit RuvB of Parafrankia sp. (strain EAN1pec).